Reading from the N-terminus, the 396-residue chain is Na(+)/H(+) antiporter NhaA 1 (396 aa).

12 helical membrane passes run 9–29 (LHNE…AMLI), 59–79 (LLLW…GLEL), 95–115 (VLPV…YVMF), 125–145 (GWAV…ALLG), 154–174 (LFLL…IAIF), 177–197 (SDLS…LFLL), 200–220 (IGVK…VAVL), 223–243 (GVHA…KGET), 260–280 (VVGL…SLAG), 281–301 (LGLN…LLLG), 332–352 (GVAL…SLAF), and 373–393 (ILSG…FSLA).

It belongs to the NhaA Na(+)/H(+) (TC 2.A.33) antiporter family.

It localises to the cell inner membrane. It carries out the reaction Na(+)(in) + 2 H(+)(out) = Na(+)(out) + 2 H(+)(in). In terms of biological role, na(+)/H(+) antiporter that extrudes sodium in exchange for external protons. The protein is Na(+)/H(+) antiporter NhaA 1 of Magnetococcus marinus (strain ATCC BAA-1437 / JCM 17883 / MC-1).